The sequence spans 473 residues: Inactive FRIGIDA-like protein 2 (473 aa).

2 coiled-coil regions span residues 3–35 and 306–361; these read AAES…RSLL and SLKV…RATK. The interval 356-384 is disordered; the sequence is RKRATKFNSPANPQQPQEQKVDNKRPRVA. Over residues 361-373 the composition is skewed to polar residues; the sequence is KFNSPANPQQPQE.

It belongs to the Frigida family. Expressed at low levels throughout the plant, with slightly higher expression in developing seeds and the highest expression in pollen.

Its function is as follows. Inactive FRIGIDA-like 2 protein. This chain is Inactive FRIGIDA-like protein 2 (FRL2), found in Arabidopsis thaliana (Mouse-ear cress).